Consider the following 452-residue polypeptide: Probable intron-encoded endonuclease 2 (452 aa).

The next 3 membrane-spanning stretches (helical) occupy residues 1 to 21, 22 to 42, and 57 to 77; these read MNIT…NRKN, IILM…LILV, and IYII…LVAF. The ndh-4L exon 1 encoded stretch occupies residues 1–80; the sequence is MNITLILFLI…LAILVAFYRL (80 aa). The segment at 81–452 is ndh-4L intron 1 encoded; the sequence is INSPVKNPRS…SLEGGMNKNI (372 aa).

This sequence in the N-terminal section; belongs to the complex I subunit 4L family. It in the C-terminal section; belongs to the LAGLIDADG endonuclease family.

The protein resides in the mitochondrion membrane. In terms of biological role, mitochondrial DNA endonuclease involved in intron homing. The polypeptide is Probable intron-encoded endonuclease 2 (Neurospora crassa (strain ATCC 24698 / 74-OR23-1A / CBS 708.71 / DSM 1257 / FGSC 987)).